The chain runs to 297 residues: Homoserine kinase (297 aa).

85–95 (PPTRGMGSSSA) provides a ligand contact to ATP.

It belongs to the GHMP kinase family. Homoserine kinase subfamily.

It localises to the cytoplasm. It carries out the reaction L-homoserine + ATP = O-phospho-L-homoserine + ADP + H(+). Its pathway is amino-acid biosynthesis; L-threonine biosynthesis; L-threonine from L-aspartate: step 4/5. Functionally, catalyzes the ATP-dependent phosphorylation of L-homoserine to L-homoserine phosphate. This chain is Homoserine kinase, found in Desulfitobacterium hafniense (strain DSM 10664 / DCB-2).